Consider the following 217-residue polypeptide: Probable transaldolase (217 aa).

The Schiff-base intermediate with substrate role is filled by Lys-83.

It belongs to the transaldolase family. Type 3B subfamily.

The protein resides in the cytoplasm. It carries out the reaction D-sedoheptulose 7-phosphate + D-glyceraldehyde 3-phosphate = D-erythrose 4-phosphate + beta-D-fructose 6-phosphate. It participates in carbohydrate degradation; pentose phosphate pathway; D-glyceraldehyde 3-phosphate and beta-D-fructose 6-phosphate from D-ribose 5-phosphate and D-xylulose 5-phosphate (non-oxidative stage): step 2/3. Functionally, transaldolase is important for the balance of metabolites in the pentose-phosphate pathway. The sequence is that of Probable transaldolase from Roseobacter denitrificans (strain ATCC 33942 / OCh 114) (Erythrobacter sp. (strain OCh 114)).